Reading from the N-terminus, the 154-residue chain is Large ribosomal subunit protein uL30 (154 aa).

Belongs to the universal ribosomal protein uL30 family. Part of the 50S ribosomal subunit.

The polypeptide is Large ribosomal subunit protein uL30 (Methanococcus maripaludis (strain DSM 14266 / JCM 13030 / NBRC 101832 / S2 / LL)).